A 425-amino-acid polypeptide reads, in one-letter code: Serine--tRNA ligase (425 aa).

232–234 contributes to the L-serine binding site; the sequence is TAE. Residues 263 to 265 and valine 279 each bind ATP; that span reads RRE. Glutamate 286 provides a ligand contact to L-serine. Position 350–353 (350–353) interacts with ATP; sequence EVVS. Threonine 387 serves as a coordination point for L-serine.

It belongs to the class-II aminoacyl-tRNA synthetase family. Type-1 seryl-tRNA synthetase subfamily. As to quaternary structure, homodimer. The tRNA molecule binds across the dimer.

The protein resides in the cytoplasm. It catalyses the reaction tRNA(Ser) + L-serine + ATP = L-seryl-tRNA(Ser) + AMP + diphosphate + H(+). The catalysed reaction is tRNA(Sec) + L-serine + ATP = L-seryl-tRNA(Sec) + AMP + diphosphate + H(+). It participates in aminoacyl-tRNA biosynthesis; selenocysteinyl-tRNA(Sec) biosynthesis; L-seryl-tRNA(Sec) from L-serine and tRNA(Sec): step 1/1. Functionally, catalyzes the attachment of serine to tRNA(Ser). Is also able to aminoacylate tRNA(Sec) with serine, to form the misacylated tRNA L-seryl-tRNA(Sec), which will be further converted into selenocysteinyl-tRNA(Sec). The sequence is that of Serine--tRNA ligase from Methanocorpusculum labreanum (strain ATCC 43576 / DSM 4855 / Z).